We begin with the raw amino-acid sequence, 65 residues long: Large ribosomal subunit protein bL35 (65 aa).

The protein belongs to the bacterial ribosomal protein bL35 family.

This is Large ribosomal subunit protein bL35 from Yersinia enterocolitica serotype O:8 / biotype 1B (strain NCTC 13174 / 8081).